Reading from the N-terminus, the 178-residue chain is Large ribosomal subunit protein bL25 (178 aa).

The protein belongs to the bacterial ribosomal protein bL25 family. CTC subfamily. As to quaternary structure, part of the 50S ribosomal subunit; part of the 5S rRNA/L5/L18/L25 subcomplex. Contacts the 5S rRNA. Binds to the 5S rRNA independently of L5 and L18.

In terms of biological role, this is one of the proteins that binds to the 5S RNA in the ribosome where it forms part of the central protuberance. In Campylobacter hominis (strain ATCC BAA-381 / DSM 21671 / CCUG 45161 / LMG 19568 / NCTC 13146 / CH001A), this protein is Large ribosomal subunit protein bL25.